A 155-amino-acid polypeptide reads, in one-letter code: MGISYSVEADPDTTAKAMLRERQMSFKHSKAIAREIKGKTAGEAVDYLEAVIEGDQPVPFKQHNSGVGHKSKVDGWDAGRYPEKASKAFLDLLENAVGNADHQGFDGEAMTIKHVAAHKVGEQQGRKPRAMGRASAWNSPQVDVELILEEPEVED.

This sequence belongs to the universal ribosomal protein uL22 family. Part of the 50S ribosomal subunit. Contacts the macrolide antibiotic tylosin in the polypeptide exit tunnel.

This protein binds specifically to 23S rRNA. It makes multiple contacts with different domains of the 23S rRNA in the assembled 50S subunit and ribosome. Its function is as follows. Contacts all 6 domains of the 23S rRNA, helping stabilize their relative orientation. An extended beta-hairpin in the C-terminus forms part of the polypeptide exit tunnel, in which it helps forms a bend with protein L4, while most of the rest of the protein is located at the polypeptide exit tunnel on the outside of the subunit. This chain is Large ribosomal subunit protein uL22, found in Haloarcula marismortui (strain ATCC 43049 / DSM 3752 / JCM 8966 / VKM B-1809) (Halobacterium marismortui).